Consider the following 163-residue polypeptide: Probable metallophosphoesterase MG207 (163 aa).

The Mn(2+) site is built by Asp9, His11, Asp34, Asn53, His75, His107, and His109.

Belongs to the metallophosphoesterase superfamily. YfcE family. Mn(2+) is required as a cofactor.

The sequence is that of Probable metallophosphoesterase MG207 from Mycoplasma genitalium (strain ATCC 33530 / DSM 19775 / NCTC 10195 / G37) (Mycoplasmoides genitalium).